Reading from the N-terminus, the 316-residue chain is tRNA dimethylallyltransferase (316 aa).

15–22 (GPTASGKS) contributes to the ATP binding site. 17 to 22 (TASGKS) provides a ligand contact to substrate. The interval 40–43 (DSRQ) is interaction with substrate tRNA.

The protein belongs to the IPP transferase family. In terms of assembly, monomer. The cofactor is Mg(2+).

The enzyme catalyses adenosine(37) in tRNA + dimethylallyl diphosphate = N(6)-dimethylallyladenosine(37) in tRNA + diphosphate. In terms of biological role, catalyzes the transfer of a dimethylallyl group onto the adenine at position 37 in tRNAs that read codons beginning with uridine, leading to the formation of N6-(dimethylallyl)adenosine (i(6)A). The protein is tRNA dimethylallyltransferase of Chlorobium limicola (strain DSM 245 / NBRC 103803 / 6330).